The sequence spans 325 residues: ATPase ASNA1 homolog 2 (325 aa).

K22–T29 is a binding site for ATP. D51 is an active-site residue. E231 and N258 together coordinate ATP. Residues C267 and C270 each coordinate Zn(2+).

The protein belongs to the arsA ATPase family. As to quaternary structure, homodimer.

It is found in the cytoplasm. The protein resides in the endoplasmic reticulum. ATPase required for the post-translational delivery of tail-anchored (TA) proteins to the endoplasmic reticulum. Recognizes and selectively binds the transmembrane domain of TA proteins in the cytosol. This complex then targets to the endoplasmic reticulum by membrane-bound receptors, where the tail-anchored protein is released for insertion. This process is regulated by ATP binding and hydrolysis. ATP binding drives the homodimer towards the closed dimer state, facilitating recognition of newly synthesized TA membrane proteins. ATP hydrolysis is required for insertion. Subsequently, the homodimer reverts towards the open dimer state, lowering its affinity for the membrane-bound receptor, and returning it to the cytosol to initiate a new round of targeting. This is ATPase ASNA1 homolog 2 from Paramecium tetraurelia.